The sequence spans 645 residues: Glucans biosynthesis glucosyltransferase H (645 aa).

The interval 1-28 (MDGTVTLSPAPTDLPPVSSLDAGQPTLP) is disordered. A run of 7 helical transmembrane segments spans residues 64-84 (LIGG…SVLW), 98-118 (LFVL…AGFI), 423-443 (APMW…GAGI), 465-485 (AIWI…LGYI), 504-524 (ALSI…VMYL), 558-578 (SYGG…LVSP), and 580-600 (LAAW…VVAV).

This sequence belongs to the glycosyltransferase 2 family. OpgH subfamily.

The protein resides in the cell inner membrane. Its pathway is glycan metabolism; osmoregulated periplasmic glucan (OPG) biosynthesis. Functionally, involved in the biosynthesis of osmoregulated periplasmic glucans (OPGs). This chain is Glucans biosynthesis glucosyltransferase H, found in Xanthomonas campestris pv. campestris (strain B100).